A 340-amino-acid polypeptide reads, in one-letter code: tRNA N6-adenosine threonylcarbamoyltransferase (340 aa).

His-113 and His-117 together coordinate Fe cation. Substrate contacts are provided by residues 135–139 (LVSGG), Asp-169, Gly-182, Asp-186, and Asn-274. A Fe cation-binding site is contributed by Asp-302.

It belongs to the KAE1 / TsaD family. The cofactor is Fe(2+).

The protein resides in the cytoplasm. It catalyses the reaction L-threonylcarbamoyladenylate + adenosine(37) in tRNA = N(6)-L-threonylcarbamoyladenosine(37) in tRNA + AMP + H(+). Its function is as follows. Required for the formation of a threonylcarbamoyl group on adenosine at position 37 (t(6)A37) in tRNAs that read codons beginning with adenine. Is involved in the transfer of the threonylcarbamoyl moiety of threonylcarbamoyl-AMP (TC-AMP) to the N6 group of A37, together with TsaE and TsaB. TsaD likely plays a direct catalytic role in this reaction. The protein is tRNA N6-adenosine threonylcarbamoyltransferase of Mycolicibacterium vanbaalenii (strain DSM 7251 / JCM 13017 / BCRC 16820 / KCTC 9966 / NRRL B-24157 / PYR-1) (Mycobacterium vanbaalenii).